Here is a 276-residue protein sequence, read N- to C-terminus: Chymotrypsin (276 aa).

An N-terminal signal peptide occupies residues M1–A16. A propeptide spans A17–E45 (activation peptide). Residues I46–E272 form the Peptidase S1 domain. A disulfide bond links C74 and C90. Residues H89 and D135 each act as charge relay system in the active site. N-linked (GlcNAc...) asparagine glycans are attached at residues N144 and N193. Intrachain disulfides connect C202–C215 and C225–C250. S229 functions as the Charge relay system in the catalytic mechanism.

It belongs to the peptidase S1 family. In terms of tissue distribution, expressed in larval carcasses and gut, and adult gut.

It is found in the secreted. It localises to the extracellular space. The enzyme catalyses Preferential cleavage: Tyr-|-Xaa, Trp-|-Xaa, Phe-|-Xaa, Leu-|-Xaa.. In terms of biological role, serine protease with chymotryptic and collagenolytic activities. This chain is Chymotrypsin, found in Phaedon cochleariae (Mustard beetle).